The following is a 444-amino-acid chain: Probable glycine dehydrogenase (decarboxylating) subunit 1 (444 aa).

It belongs to the GcvP family. N-terminal subunit subfamily. As to quaternary structure, the glycine cleavage system is composed of four proteins: P, T, L and H. In this organism, the P 'protein' is a heterodimer of two subunits.

The enzyme catalyses N(6)-[(R)-lipoyl]-L-lysyl-[glycine-cleavage complex H protein] + glycine + H(+) = N(6)-[(R)-S(8)-aminomethyldihydrolipoyl]-L-lysyl-[glycine-cleavage complex H protein] + CO2. The glycine cleavage system catalyzes the degradation of glycine. The P protein binds the alpha-amino group of glycine through its pyridoxal phosphate cofactor; CO(2) is released and the remaining methylamine moiety is then transferred to the lipoamide cofactor of the H protein. The sequence is that of Probable glycine dehydrogenase (decarboxylating) subunit 1 from Chlorobaculum parvum (strain DSM 263 / NCIMB 8327) (Chlorobium vibrioforme subsp. thiosulfatophilum).